The chain runs to 521 residues: GMP synthase [glutamine-hydrolyzing] (521 aa).

The Glutamine amidotransferase type-1 domain occupies 5-197; that stretch reads KILILDFGSQ…VLDICGAQPG (193 aa). Residue cysteine 81 is the Nucleophile of the active site. Residues histidine 171 and glutamate 173 contribute to the active site. A GMPS ATP-PPase domain is found at 198-390; that stretch reads WTMPNYIEEA…LGLPREMVYR (193 aa). 225–231 provides a ligand contact to ATP; sequence SGGVDSS.

As to quaternary structure, homodimer.

The enzyme catalyses XMP + L-glutamine + ATP + H2O = GMP + L-glutamate + AMP + diphosphate + 2 H(+). It functions in the pathway purine metabolism; GMP biosynthesis; GMP from XMP (L-Gln route): step 1/1. In terms of biological role, catalyzes the synthesis of GMP from XMP. This Neisseria meningitidis serogroup B (strain ATCC BAA-335 / MC58) protein is GMP synthase [glutamine-hydrolyzing] (guaA).